Here is a 427-residue protein sequence, read N- to C-terminus: Protein adenylyltransferase Fic (427 aa).

The helical transmembrane segment at 17-37 (LLLASLAGLSIAIIVTHAPVF) threads the bilayer. 2 TPR repeats span residues 77–110 (ALAALKAASAMKHGGKHSKAVKLFQQAVSLAPHH) and 111–143 (PEILLQYGEFLEQHDVVQAEHLYNRALTANPLD). An Inhibitory (S/T)XXXE(G/N) motif motif is present at residues 200–205 (SNAIEG). Residues glutamate 204 and 286–289 (VSDH) contribute to the ATP site. A Fido domain is found at 255-390 (ITIDDIIEIH…IRPFIRFVAR (136 aa)). Histidine 333 is a catalytic residue. Residues 337–344 (DGNGRTAR), 369–370 (YY), and asparagine 377 contribute to the ATP site.

Belongs to the fic family. Homodimer.

It localises to the membrane. It catalyses the reaction L-tyrosyl-[protein] + ATP = O-(5'-adenylyl)-L-tyrosyl-[protein] + diphosphate. It carries out the reaction L-threonyl-[protein] + ATP = 3-O-(5'-adenylyl)-L-threonyl-[protein] + diphosphate. The enzyme catalyses 3-O-(5'-adenylyl)-L-threonyl-[protein] + H2O = L-threonyl-[protein] + AMP + H(+). The side chain of Glu-204 determines which of the two opposing activities (AMPylase or de-AMPylase) will take place. In response to endoplasmic reticulum stress, mediates de-AMPylase activity. Adenylyltransferase activity is inhibited by the inhibitory helix present at the N-terminus: Glu-204 binds ATP and competes with ATP-binding at Arg-344, thereby preventing adenylyltransferase activity. In unstressed cells, disengagement of Glu-204 promotes adenylyltransferase activity. Activation dissociates ATP-binding from Glu-204, allowing ordered binding of the entire ATP moiety with the alpha-phosphate in an orientation that is productive for accepting an incoming target hydroxyl side chain. Protein that can both mediate the addition of adenosine 5'-monophosphate (AMP) to specific residues of target proteins (AMPylation), and the removal of the same modification from target proteins (de-AMPylation), depending on the context. The side chain of Glu-204 determines which of the two opposing activities (AMPylase or de-AMPylase) will take place. Acts as a key regulator of the unfolded protein response (UPR) by mediating AMPylation or de-AMPylation of Hsc70-3/BiP. In unstressed cells, acts as an adenylyltransferase by mediating AMPylation of Hsc70-3/BiP, thereby inactivating it. In response to endoplasmic reticulum stress, acts as a phosphodiesterase by mediating removal of ATP (de-AMPylation) from Hsc70-3/BiP, leading to restore HSPA5/BiP activity. This Nematostella vectensis (Starlet sea anemone) protein is Protein adenylyltransferase Fic.